Here is a 138-residue protein sequence, read N- to C-terminus: uncharacterized protein (138 aa).

Transmembrane regions (helical) follow at residues Met1–Val21 and Tyr46–Val66.

The protein resides in the cell membrane. This is an uncharacterized protein from Methanocaldococcus jannaschii (strain ATCC 43067 / DSM 2661 / JAL-1 / JCM 10045 / NBRC 100440) (Methanococcus jannaschii).